The sequence spans 247 residues: Phycocyanobilin:ferredoxin oxidoreductase (247 aa).

It belongs to the HY2 family.

It catalyses the reaction (2R,3Z)-phycocyanobilin + 4 oxidized [2Fe-2S]-[ferredoxin] = biliverdin IXalpha + 4 reduced [2Fe-2S]-[ferredoxin] + 4 H(+). Functionally, catalyzes the four-electron reduction of biliverdin IX-alpha (2-electron reduction at both the A and D rings); the reaction proceeds via an isolatable 2-electron intermediate, 181,182-dihydrobiliverdin. The polypeptide is Phycocyanobilin:ferredoxin oxidoreductase (pcyA) (Prochlorococcus marinus (strain SARG / CCMP1375 / SS120)).